Reading from the N-terminus, the 492-residue chain is Phytoene desaturase (lycopene-forming) (492 aa).

Val-5–Gly-38 serves as a coordination point for FAD.

This sequence belongs to the carotenoid/retinoid oxidoreductase family. Requires FAD as cofactor.

It catalyses the reaction 15-cis-phytoene + 4 A = all-trans-lycopene + 4 AH2. Its pathway is carotenoid biosynthesis; lycopene biosynthesis. This enzyme converts phytoene into lycopene via the intermediaries of phytofluene, zeta-carotene and neurosporene by the introduction of four double bonds. The chain is Phytoene desaturase (lycopene-forming) (crtI) from Pseudescherichia vulneris (Escherichia vulneris).